We begin with the raw amino-acid sequence, 163 residues long: Cytochrome c-type biogenesis protein CcmE (163 aa).

At methionine 1 to arginine 8 the chain is on the cytoplasmic side. The chain crosses the membrane as a helical; Signal-anchor for type II membrane protein span at residues leucine 9–alanine 29. Residues leucine 30–tyrosine 163 are Periplasmic-facing. 2 residues coordinate heme: histidine 131 and tyrosine 135.

The protein belongs to the CcmE/CycJ family.

Its subcellular location is the cell inner membrane. In terms of biological role, heme chaperone required for the biogenesis of c-type cytochromes. Transiently binds heme delivered by CcmC and transfers the heme to apo-cytochromes in a process facilitated by CcmF and CcmH. This chain is Cytochrome c-type biogenesis protein CcmE, found in Shewanella denitrificans (strain OS217 / ATCC BAA-1090 / DSM 15013).